Reading from the N-terminus, the 1011-residue chain is DNA-directed RNA polymerase subunit beta'' (1011 aa).

Residues C216, C282, C288, and C291 each coordinate Zn(2+).

The protein belongs to the RNA polymerase beta' chain family. RpoC2 subfamily. In plastids the minimal PEP RNA polymerase catalytic core is composed of four subunits: alpha, beta, beta', and beta''. When a (nuclear-encoded) sigma factor is associated with the core the holoenzyme is formed, which can initiate transcription. The cofactor is Zn(2+).

The protein resides in the plastid. It localises to the chloroplast. It carries out the reaction RNA(n) + a ribonucleoside 5'-triphosphate = RNA(n+1) + diphosphate. Its function is as follows. DNA-dependent RNA polymerase catalyzes the transcription of DNA into RNA using the four ribonucleoside triphosphates as substrates. The polypeptide is DNA-directed RNA polymerase subunit beta'' (Ostreococcus tauri).